Consider the following 392-residue polypeptide: Probable tRNA sulfurtransferase (392 aa).

Positions 63–169 (GRAADAAADT…DAEAFVFLTH (107 aa)) constitute a THUMP domain. Residues 187–188 (LV), arginine 270, glycine 292, and glutamine 301 contribute to the ATP site.

Belongs to the ThiI family.

The protein localises to the cytoplasm. The enzyme catalyses [ThiI sulfur-carrier protein]-S-sulfanyl-L-cysteine + a uridine in tRNA + 2 reduced [2Fe-2S]-[ferredoxin] + ATP + H(+) = [ThiI sulfur-carrier protein]-L-cysteine + a 4-thiouridine in tRNA + 2 oxidized [2Fe-2S]-[ferredoxin] + AMP + diphosphate. It carries out the reaction [ThiS sulfur-carrier protein]-C-terminal Gly-Gly-AMP + S-sulfanyl-L-cysteinyl-[cysteine desulfurase] + AH2 = [ThiS sulfur-carrier protein]-C-terminal-Gly-aminoethanethioate + L-cysteinyl-[cysteine desulfurase] + A + AMP + 2 H(+). It participates in cofactor biosynthesis; thiamine diphosphate biosynthesis. Catalyzes the ATP-dependent transfer of a sulfur to tRNA to produce 4-thiouridine in position 8 of tRNAs, which functions as a near-UV photosensor. Also catalyzes the transfer of sulfur to the sulfur carrier protein ThiS, forming ThiS-thiocarboxylate. This is a step in the synthesis of thiazole, in the thiamine biosynthesis pathway. The sulfur is donated as persulfide by IscS. This is Probable tRNA sulfurtransferase from Halobacterium salinarum (strain ATCC 29341 / DSM 671 / R1).